We begin with the raw amino-acid sequence, 384 residues long: 2-isopropylmalate synthase 2 (384 aa).

The region spanning 9-260 (VYIVDTTLRD…DLGIDTSRFR (252 aa)) is the Pyruvate carboxyltransferase domain. 4 residues coordinate Mn(2+): aspartate 18, histidine 198, histidine 200, and asparagine 234.

This sequence belongs to the alpha-IPM synthase/homocitrate synthase family. LeuA type 1 subfamily. As to quaternary structure, homodimer. Requires Mn(2+) as cofactor.

It is found in the cytoplasm. It catalyses the reaction 3-methyl-2-oxobutanoate + acetyl-CoA + H2O = (2S)-2-isopropylmalate + CoA + H(+). It participates in amino-acid biosynthesis; L-leucine biosynthesis; L-leucine from 3-methyl-2-oxobutanoate: step 1/4. Its function is as follows. Catalyzes the condensation of the acetyl group of acetyl-CoA with 3-methyl-2-oxobutanoate (2-ketoisovalerate) to form 3-carboxy-3-hydroxy-4-methylpentanoate (2-isopropylmalate). This Caldanaerobacter subterraneus subsp. tengcongensis (strain DSM 15242 / JCM 11007 / NBRC 100824 / MB4) (Thermoanaerobacter tengcongensis) protein is 2-isopropylmalate synthase 2.